A 160-amino-acid polypeptide reads, in one-letter code: SsrA-binding protein (160 aa).

Positions 134-160 are disordered; it reads YDKRDTERERDSNRELHRAVRNKGKED.

Belongs to the SmpB family.

Its subcellular location is the cytoplasm. In terms of biological role, required for rescue of stalled ribosomes mediated by trans-translation. Binds to transfer-messenger RNA (tmRNA), required for stable association of tmRNA with ribosomes. tmRNA and SmpB together mimic tRNA shape, replacing the anticodon stem-loop with SmpB. tmRNA is encoded by the ssrA gene; the 2 termini fold to resemble tRNA(Ala) and it encodes a 'tag peptide', a short internal open reading frame. During trans-translation Ala-aminoacylated tmRNA acts like a tRNA, entering the A-site of stalled ribosomes, displacing the stalled mRNA. The ribosome then switches to translate the ORF on the tmRNA; the nascent peptide is terminated with the 'tag peptide' encoded by the tmRNA and targeted for degradation. The ribosome is freed to recommence translation, which seems to be the essential function of trans-translation. This is SsrA-binding protein from Pseudomonas fluorescens (strain SBW25).